The chain runs to 224 residues: LexA repressor (224 aa).

Positions 31 to 51 form a DNA-binding region, H-T-H motif; that stretch reads RAEIAAELGFKSANAAEEHLQ. Residues Ser142 and Lys179 each act as for autocatalytic cleavage activity in the active site.

This sequence belongs to the peptidase S24 family. In terms of assembly, homodimer.

The catalysed reaction is Hydrolysis of Ala-|-Gly bond in repressor LexA.. Represses a number of genes involved in the response to DNA damage (SOS response), including recA and lexA. In the presence of single-stranded DNA, RecA interacts with LexA causing an autocatalytic cleavage which disrupts the DNA-binding part of LexA, leading to derepression of the SOS regulon and eventually DNA repair. The polypeptide is LexA repressor (Acidovorax ebreus (strain TPSY) (Diaphorobacter sp. (strain TPSY))).